An 801-amino-acid polypeptide reads, in one-letter code: PR domain zinc finger protein 4 (801 aa).

One can recognise an SET domain in the interval 412-529 (KQLVLRQSIV…PENELLFYYS (118 aa)). The C2H2-type 1; atypical zinc finger occupies 545-566 (HLCNCGKECNSYTEFKAHLTSH). 4 consecutive C2H2-type zinc fingers follow at residues 618 to 640 (HKCD…LKIH), 646 to 668 (YRCT…MVIH), 674 to 696 (LKCD…VLIH), and 702 to 724 (IKCP…LNSH). A C2H2-type 6; atypical zinc finger spans residues 730-752 (YVCEKCTKAYLTKYHLTRHLKTC). Residues 751 to 782 (TCKGPTSSSSAPEEEEEDDSEEEDLADSVGTE) form a disordered region. Over residues 762-776 (PEEEEEDDSEEEDLA) the composition is skewed to acidic residues.

This sequence belongs to the class V-like SAM-binding methyltransferase superfamily.

It is found in the nucleus. Functionally, may function as a transcription factor involved in cell differentiation. The polypeptide is PR domain zinc finger protein 4 (PRDM4) (Pongo abelii (Sumatran orangutan)).